A 121-amino-acid chain; its full sequence is Basic phospholipase A2 VRV-PL-V (121 aa).

Cystine bridges form between C26/C115, C28/C44, C43/C95, C49/C121, C50/C88, C57/C81, and C75/C86. Positions 27, 29, and 31 each coordinate Ca(2+). H47 is a catalytic residue. Residue D48 participates in Ca(2+) binding. The active site involves D89.

Belongs to the phospholipase A2 family. Group II subfamily. D49 sub-subfamily. Monomer. The cofactor is Ca(2+). As to expression, expressed by the venom gland.

The protein resides in the secreted. The catalysed reaction is a 1,2-diacyl-sn-glycero-3-phosphocholine + H2O = a 1-acyl-sn-glycero-3-phosphocholine + a fatty acid + H(+). Functionally, snake venom phospholipase A2 (PLA2) that has a low enzymatic activity. PLA2 catalyzes the calcium-dependent hydrolysis of the 2-acyl groups in 3-sn-phosphoglycerides. The chain is Basic phospholipase A2 VRV-PL-V from Daboia russelii (Russel's viper).